The primary structure comprises 167 residues: ATP synthase subunit delta, mitochondrial (167 aa).

The N-terminal 28 residues, 1–28 (MFRLSNYMLRKSQFPQGLVRAPFGIRGY), are a transit peptide targeting the mitochondrion.

It belongs to the ATPase epsilon chain family. As to quaternary structure, F-type ATPases have 2 components, CF(1) - the catalytic core - and CF(0) - the membrane proton channel. CF(1) has five subunits: alpha(3), beta(3), gamma(1), delta(1), epsilon(1). CF(0) has three main subunits: a, b and c.

Its subcellular location is the mitochondrion. The protein localises to the mitochondrion inner membrane. Its function is as follows. Mitochondrial membrane ATP synthase (F(1)F(0) ATP synthase or Complex V) produces ATP from ADP in the presence of a proton gradient across the membrane which is generated by electron transport complexes of the respiratory chain. F-type ATPases consist of two structural domains, F(1) - containing the extramembraneous catalytic core, and F(0) - containing the membrane proton channel, linked together by a central stalk and a peripheral stalk. During catalysis, ATP turnover in the catalytic domain of F(1) is coupled via a rotary mechanism of the central stalk subunits to proton translocation. Part of the complex F(1) domain and of the central stalk which is part of the complex rotary element. Rotation of the central stalk against the surrounding alpha(3)beta(3) subunits leads to hydrolysis of ATP in three separate catalytic sites on the beta subunits. This is ATP synthase subunit delta, mitochondrial (atp16) from Schizosaccharomyces pombe (strain 972 / ATCC 24843) (Fission yeast).